The chain runs to 565 residues: Acyl-CoA ligase easD (565 aa).

Residues 213–221 (TSGTSGKQK), 354–359 (HAYGLT), aspartate 438, arginine 457, and lysine 555 contribute to the ATP site. The segment at 284-354 (DMQLMLKTIE…KLRPTWKINH (71 aa)) is SBD1. Residues 355-417 (AYGLTETGVV…FNSPSCFLGY (63 aa)) are SBD2.

This sequence belongs to the ATP-dependent AMP-binding enzyme family.

Its pathway is antibiotic biosynthesis. Its function is as follows. Acyl-CoA ligase; part of the gene cluster that mediates the biosynthesis of emericellamides, secondary metabolites acting as antibiotics. The biosynthesis of emericellamides initiates from the highly reducing polyketide synthase easB which catalyzes the formation of the linear polyketide chain. EasB produces several polyketides that can be further processed by the downstream enzymes. The polyketides are released from easB as linear polyketide carboxylic acids, which are converted to CoA thioesters by the acyl-CoA ligase easD. The substrates are then loaded onto the acyltransferase easC, which shuttles them to the first thiolation (T) domain of the nonribosomal peptide synthetase easA. EasA then performs condensation of the polyketides with one glycine, two alanine, one valine and one leucine residues. A last step of cyclization leads to the production of emericellamides. In Emericella nidulans (strain FGSC A4 / ATCC 38163 / CBS 112.46 / NRRL 194 / M139) (Aspergillus nidulans), this protein is Acyl-CoA ligase easD.